A 212-amino-acid chain; its full sequence is Thiamine-phosphate synthase (212 aa).

4-amino-2-methyl-5-(diphosphooxymethyl)pyrimidine-binding positions include 39–43 (QLREK) and Asn71. 2 residues coordinate Mg(2+): Asp72 and Asp91. Residue Ser110 coordinates 4-amino-2-methyl-5-(diphosphooxymethyl)pyrimidine. Position 137 to 139 (137 to 139 (TPT)) interacts with 2-[(2R,5Z)-2-carboxy-4-methylthiazol-5(2H)-ylidene]ethyl phosphate. Residue Lys140 participates in 4-amino-2-methyl-5-(diphosphooxymethyl)pyrimidine binding. Gly168 lines the 2-[(2R,5Z)-2-carboxy-4-methylthiazol-5(2H)-ylidene]ethyl phosphate pocket.

The protein belongs to the thiamine-phosphate synthase family. Requires Mg(2+) as cofactor.

The enzyme catalyses 2-[(2R,5Z)-2-carboxy-4-methylthiazol-5(2H)-ylidene]ethyl phosphate + 4-amino-2-methyl-5-(diphosphooxymethyl)pyrimidine + 2 H(+) = thiamine phosphate + CO2 + diphosphate. The catalysed reaction is 2-(2-carboxy-4-methylthiazol-5-yl)ethyl phosphate + 4-amino-2-methyl-5-(diphosphooxymethyl)pyrimidine + 2 H(+) = thiamine phosphate + CO2 + diphosphate. It catalyses the reaction 4-methyl-5-(2-phosphooxyethyl)-thiazole + 4-amino-2-methyl-5-(diphosphooxymethyl)pyrimidine + H(+) = thiamine phosphate + diphosphate. It functions in the pathway cofactor biosynthesis; thiamine diphosphate biosynthesis; thiamine phosphate from 4-amino-2-methyl-5-diphosphomethylpyrimidine and 4-methyl-5-(2-phosphoethyl)-thiazole: step 1/1. Condenses 4-methyl-5-(beta-hydroxyethyl)thiazole monophosphate (THZ-P) and 2-methyl-4-amino-5-hydroxymethyl pyrimidine pyrophosphate (HMP-PP) to form thiamine monophosphate (TMP). The protein is Thiamine-phosphate synthase of Acidothermus cellulolyticus (strain ATCC 43068 / DSM 8971 / 11B).